The sequence spans 489 residues: Cysteine--tRNA ligase (489 aa).

Cysteine 27 provides a ligand contact to Zn(2+). Residues 29–39 (VTVYDLCHLGH) carry the 'HIGH' region motif. Positions 211, 236, and 240 each coordinate Zn(2+). The short motif at 268-272 (KMSKS) is the 'KMSKS' region element. ATP is bound at residue lysine 271.

The protein belongs to the class-I aminoacyl-tRNA synthetase family. Monomer. Requires Zn(2+) as cofactor.

The protein localises to the cytoplasm. The catalysed reaction is tRNA(Cys) + L-cysteine + ATP = L-cysteinyl-tRNA(Cys) + AMP + diphosphate. The chain is Cysteine--tRNA ligase from Prochlorococcus marinus (strain MIT 9312).